The sequence spans 297 residues: RNA polymerase sigma-F factor (297 aa).

The interval Met-1 to Gly-46 is disordered. Positions Gln-10–Pro-22 are enriched in pro residues. Residues Gln-23 to Pro-33 are compositionally biased toward basic and acidic residues. Residues Asp-101–Ile-114 carry the Polymerase core binding motif. Positions Gln-264–Ala-283 form a DNA-binding region, H-T-H motif.

This sequence belongs to the sigma-70 factor family. SigB subfamily.

In terms of biological role, sigma factors are initiation factors that promote the attachment of RNA polymerase to specific initiation sites and are then released. This sigma factor is required for normal spore maturation. The sequence is that of RNA polymerase sigma-F factor (sigF) from Kitasatospora aureofaciens (Streptomyces aureofaciens).